The following is a 275-amino-acid chain: Putative rhamnulose-1-phosphate aldolase (275 aa).

Glu117 is an active-site residue. The Zn(2+) site is built by His141, His143, and His212.

The protein belongs to the aldolase class II family. RhaD subfamily. In terms of assembly, homotetramer. Zn(2+) is required as a cofactor.

Its subcellular location is the cytoplasm. The catalysed reaction is L-rhamnulose 1-phosphate = (S)-lactaldehyde + dihydroxyacetone phosphate. It participates in carbohydrate degradation; L-rhamnose degradation; glycerone phosphate from L-rhamnose: step 3/3. In terms of biological role, catalyzes the reversible cleavage of L-rhamnulose-1-phosphate to dihydroxyacetone phosphate (DHAP) and L-lactaldehyde. In Salmonella typhi, this protein is Putative rhamnulose-1-phosphate aldolase.